A 382-amino-acid polypeptide reads, in one-letter code: Pyrimidine monooxygenase RutA (382 aa).

FMN is bound by residues 68 to 69 (IK), Asn134, Glu143, 159 to 160 (RY), and Ser209.

This sequence belongs to the NtaA/SnaA/DszA monooxygenase family. RutA subfamily.

It catalyses the reaction uracil + FMNH2 + NADH + O2 = (Z)-3-ureidoacrylate + FMN + NAD(+) + H2O + H(+). The catalysed reaction is thymine + FMNH2 + NADH + O2 = (Z)-2-methylureidoacrylate + FMN + NAD(+) + H2O + H(+). In terms of biological role, catalyzes the pyrimidine ring opening between N-3 and C-4 by an unusual flavin hydroperoxide-catalyzed mechanism, adding oxygen atoms in the process to yield ureidoacrylate peracid, that immediately reacts with FMN forming ureidoacrylate and FMN-N(5)-oxide. The FMN-N(5)-oxide reacts spontaneously with NADH to produce FMN. Requires the flavin reductase RutF to regenerate FMN in vivo. The chain is Pyrimidine monooxygenase RutA from Escherichia coli O45:K1 (strain S88 / ExPEC).